A 321-amino-acid polypeptide reads, in one-letter code: Probable pectate lyase A (321 aa).

The first 18 residues, 1–18 (MKFVATLIACGLSGLALA), serve as a signal peptide directing secretion. Residue asparagine 93 is glycosylated (N-linked (GlcNAc...) asparagine). Ca(2+) is bound by residues aspartate 134, aspartate 163, and aspartate 167. Arginine 220 is a catalytic residue. Asparagine 238 carries an N-linked (GlcNAc...) asparagine glycan.

The protein belongs to the polysaccharide lyase 1 family. The cofactor is Ca(2+).

The protein resides in the secreted. It catalyses the reaction Eliminative cleavage of (1-&gt;4)-alpha-D-galacturonan to give oligosaccharides with 4-deoxy-alpha-D-galact-4-enuronosyl groups at their non-reducing ends.. Pectinolytic enzyme consist of four classes of enzymes: pectin lyase, polygalacturonase, pectin methylesterase and rhamnogalacturonase. Among pectinolytic enzymes, pectin lyase is the most important in depolymerization of pectin, since it cleaves internal glycosidic bonds of highly methylated pectins. Favors pectate, the anion, over pectin, the methyl ester. The protein is Probable pectate lyase A (plyA) of Aspergillus fumigatus (strain ATCC MYA-4609 / CBS 101355 / FGSC A1100 / Af293) (Neosartorya fumigata).